We begin with the raw amino-acid sequence, 268 residues long: MIIMGRGKIEVKRIENKTSRQVTFSKRRAGLLKKTHELSVLCDAQIGLIIFSSKGKLFEYCSQPHSMSQIISRYLQTTGASLPVEDNRVQLYDEVAKMRRDTLNLQLSLQRYKGDDLSLAQYEELNELEKQLEHALNKIRARKLELMQQQMENLKKTEKMLEKENHDMYQWLMNNQMYKQESAAMDHEDHHHHHEHQQAITELNLLGEQPLLSHFTFFGDQEQPSTSTVNHFASISLTSPPANSISPYRLQPSHPNLQDSHVHGPSYD.

The region spanning 4 to 64 (MGRGKIEVKR…GKLFEYCSQP (61 aa)) is the MADS-box domain. The K-box domain occupies 88 to 178 (RVQLYDEVAK…YQWLMNNQMY (91 aa)). The segment at 243–268 (NSISPYRLQPSHPNLQDSHVHGPSYD) is disordered.

Its subcellular location is the nucleus. In terms of biological role, probable transcription factor. The chain is MADS-box protein FBP24 (FBP24) from Petunia hybrida (Petunia).